Reading from the N-terminus, the 264-residue chain is Major prion protein (264 aa).

Residues 1–24 form the signal peptide; the sequence is MVKSHIGSWILVLFVAMWSDVGLC. The interaction with GRB2, ERI3 and SYN1 stretch occupies residues 25–241; sequence KKRPKPGGGW…ESQAYYQRGA (217 aa). A disordered region spans residues 28–118; that stretch reads PKPGGGWNTG…QWNKPSKPKT (91 aa). Positions 37 to 54 are enriched in low complexity; that stretch reads GGSRYPGPGSPGGNRYPP. Tandem repeats lie at residues 54–62, 63–70, 71–78, 79–86, 87–94, and 95–103. A 6 X 8 AA tandem repeats of P-H-G-G-G-W-G-Q region spans residues 54–103; the sequence is PQGGGGWGQPHGGGWGQPHGGGWGQPHGGGWGQPHGGGWGQPHGGGGWGQ. The span at 55-107 shows a compositional bias: gly residues; the sequence is QGGGGWGQPHGGGWGQPHGGGWGQPHGGGWGQPHGGGWGQPHGGGGWGQGGTH. The Cu(2+) site is built by His-72, Gly-73, Gly-74, His-80, Gly-81, Gly-82, His-88, Gly-89, Gly-90, His-96, and Gly-98. Cys-190 and Cys-225 are oxidised to a cystine. Asn-192 and Asn-208 each carry an N-linked (GlcNAc...) asparagine glycan. Ala-241 is lipidated: GPI-anchor amidated alanine. Residues 242 to 264 constitute a propeptide, removed in mature form; sequence SVILFSSPPVILLISFLIFLIVG.

This sequence belongs to the prion family. As to quaternary structure, monomer and homodimer. Has a tendency to aggregate into amyloid fibrils containing a cross-beta spine, formed by a steric zipper of superposed beta-strands. Soluble oligomers may represent an intermediate stage on the path to fibril formation. Copper binding may promote oligomerization. Interacts with GRB2, APP, ERI3/PRNPIP and SYN1. Mislocalized cytosolically exposed PrP interacts with MGRN1; this interaction alters MGRN1 subcellular location and causes lysosomal enlargement. Interacts with KIAA1191.

Its subcellular location is the cell membrane. The protein resides in the golgi apparatus. In terms of biological role, its primary physiological function is unclear. Has cytoprotective activity against internal or environmental stresses. May play a role in neuronal development and synaptic plasticity. May be required for neuronal myelin sheath maintenance. May play a role in iron uptake and iron homeostasis. Soluble oligomers are toxic to cultured neuroblastoma cells and induce apoptosis (in vitro). Association with GPC1 (via its heparan sulfate chains) targets PRNP to lipid rafts. Also provides Cu(2+) or Zn(2+) for the ascorbate-mediated GPC1 deaminase degradation of its heparan sulfate side chains. In Ailuropoda melanoleuca (Giant panda), this protein is Major prion protein (PRNP).